A 147-amino-acid polypeptide reads, in one-letter code: Sec-independent protein translocase protein TatB (147 aa).

A helical membrane pass occupies residues 2–22; sequence FSSIGWPEIFTVLILGLIIIG. Residues 96-147 are disordered; that stretch reads FDPKKIMASGTEGEAYRERGINPQPAGDSASPQTPSNKESQPKAGFSWDDIT. Residues 125–134 are compositionally biased toward polar residues; the sequence is ASPQTPSNKE.

Belongs to the TatB family. In terms of assembly, the Tat system comprises two distinct complexes: a TatABC complex, containing multiple copies of TatA, TatB and TatC subunits, and a separate TatA complex, containing only TatA subunits. Substrates initially bind to the TatABC complex, which probably triggers association of the separate TatA complex to form the active translocon.

It localises to the cell membrane. Functionally, part of the twin-arginine translocation (Tat) system that transports large folded proteins containing a characteristic twin-arginine motif in their signal peptide across membranes. Together with TatC, TatB is part of a receptor directly interacting with Tat signal peptides. TatB may form an oligomeric binding site that transiently accommodates folded Tat precursor proteins before their translocation. This Corynebacterium diphtheriae (strain ATCC 700971 / NCTC 13129 / Biotype gravis) protein is Sec-independent protein translocase protein TatB.